Consider the following 589-residue polypeptide: Oligo-1,6-glucosidase IMA3 (589 aa).

D215 acts as the Nucleophile in catalysis. E277 functions as the Proton donor in the catalytic mechanism.

The protein belongs to the glycosyl hydrolase 13 family.

The protein resides in the cytoplasm. It carries out the reaction Hydrolysis of (1-&gt;6)-alpha-D-glucosidic linkages in some oligosaccharides produced from starch and glycogen by alpha-amylase, and in isomaltose.. Functionally, alpha-glucosidase with broad substrate specificity for alpha-1,4- and alpha-1,6-glucosides. Not required for isomaltose utilization, but overexpression allows the IMA1 null mutant to grow on isomaltose. In Saccharomyces cerevisiae (strain ATCC 204508 / S288c) (Baker's yeast), this protein is Oligo-1,6-glucosidase IMA3 (IMA3).